The sequence spans 176 residues: MSGAGSAGMARGLRVDGLPPLPKSLSGLLHSAAGGAAGGWRHLERLYAQKSRIQDELNRGGAGGGGARAAGMRTKPPNLDAALALLRKEMVGLRQLDMTLLCQLYGLYESIQEYKGACQAASSLDCNYALENGFFDDDEDFQEQGSLRDGQGRGSPGDPSLPLTHLSSSDWILESI.

Residues 140–165 (DFQEQGSLRDGQGRGSPGDPSLPLTH) form a disordered region.

The protein belongs to the FAM89 family.

The sequence is that of Protein FAM89A (Fam89a) from Rattus norvegicus (Rat).